Consider the following 678-residue polypeptide: MTAPGFVEFPDSPFHLYQPYPPAGDQPGAIDALTEGVSDGLMFQTLLGVTGSGKTYTMANMIARLGRPALVLAPNKTLAAQLYAEMREFFPRNAVEYFVSYYDYYQPEAYVPTRDLFIEKDSSINEHIEQMRLSATKSLLERRDTVIVGTVSCIYGIGNPGDYHAMVLILRTGDRISRREVLARLVAMQYTRNDADFTRGVFRVRCETIDIFPAESPELALRLTLFDDEIESLELFDPLTGRVRQKLPRFTVYPGSHYVTPRETVLRAIETIKEELRERLAQLIADGKLVEAQRLEQRTRFDLEMLQELGFCKGIENYSRHLSGAAPGEPPPTLIDYLPADALMFIDESHVTIGQLGGMYRGDRSRKETLVQYGFRLPSALDNRPLRLEEFEARMRQCVFVSATPAAYEQEHADNVVEQVVRPTGLVDPIVEVRPAHTQVDDLLGEIHKRAALQERVLVTTLTKRMAEDLTDFLSEHGVRVRYLHSDIDTVERVEIIRDLRLGVFDVLVGINLLREGLDIPEVSLVAILDADKEGFLRSERSLIQTIGRAARNLNGRAILYADRITDSMRRAIDETERRRAKQIQHNTDHGITARGVSKAVRELIDGVVAPAGHDALESAVPAEVLTDEKAMAREIRRLEKLMMDHARNLEFEQAAAARDALNALKSRLLLDGVGWSG.

The region spanning 35–422 is the Helicase ATP-binding domain; that stretch reads EGVSDGLMFQ…ADNVVEQVVR (388 aa). Position 48-55 (48-55) interacts with ATP; the sequence is GVTGSGKT. Positions 101-124 match the Beta-hairpin motif; sequence YYDYYQPEAYVPTRDLFIEKDSSI. The region spanning 439–605 is the Helicase C-terminal domain; sequence QVDDLLGEIH…GVSKAVRELI (167 aa). In terms of domain architecture, UVR spans 633–668; the sequence is AREIRRLEKLMMDHARNLEFEQAAAARDALNALKSR.

It belongs to the UvrB family. In terms of assembly, forms a heterotetramer with UvrA during the search for lesions. Interacts with UvrC in an incision complex.

Its subcellular location is the cytoplasm. In terms of biological role, the UvrABC repair system catalyzes the recognition and processing of DNA lesions. A damage recognition complex composed of 2 UvrA and 2 UvrB subunits scans DNA for abnormalities. Upon binding of the UvrA(2)B(2) complex to a putative damaged site, the DNA wraps around one UvrB monomer. DNA wrap is dependent on ATP binding by UvrB and probably causes local melting of the DNA helix, facilitating insertion of UvrB beta-hairpin between the DNA strands. Then UvrB probes one DNA strand for the presence of a lesion. If a lesion is found the UvrA subunits dissociate and the UvrB-DNA preincision complex is formed. This complex is subsequently bound by UvrC and the second UvrB is released. If no lesion is found, the DNA wraps around the other UvrB subunit that will check the other stand for damage. This Bordetella pertussis (strain Tohama I / ATCC BAA-589 / NCTC 13251) protein is UvrABC system protein B.